The following is a 243-amino-acid chain: 1-(5-phosphoribosyl)-5-[(5-phosphoribosylamino)methylideneamino] imidazole-4-carboxamide isomerase (243 aa).

D8 (proton acceptor) is an active-site residue. D130 serves as the catalytic Proton donor.

The protein belongs to the HisA/HisF family.

The protein resides in the cytoplasm. It catalyses the reaction 1-(5-phospho-beta-D-ribosyl)-5-[(5-phospho-beta-D-ribosylamino)methylideneamino]imidazole-4-carboxamide = 5-[(5-phospho-1-deoxy-D-ribulos-1-ylimino)methylamino]-1-(5-phospho-beta-D-ribosyl)imidazole-4-carboxamide. It functions in the pathway amino-acid biosynthesis; L-histidine biosynthesis; L-histidine from 5-phospho-alpha-D-ribose 1-diphosphate: step 4/9. The chain is 1-(5-phosphoribosyl)-5-[(5-phosphoribosylamino)methylideneamino] imidazole-4-carboxamide isomerase from Ruthia magnifica subsp. Calyptogena magnifica.